The chain runs to 620 residues: MIEVPEDNRSSQTKRKNTEKNCNELMVDEKMDDDSSPRDEMKDKLKGTKSLIIRKSELMAKKYDTWQLKAIFLFSAFICTFAYGLDSSIRGTYMTYAMNSYSAHSLISTVSVIVLMISAVSQVIFGGLSDIFGRLTLFLVSIVLYIVGTIIQSQAYDVQRYAAGAVFYYVGLVGVMLQVVLMLSDNSSLKWRLFYTLIPSWPSIITTWVSGSVVEAANPLENWSWNIAMWAFIFPLCCIPLILCMLHMRWKVRNDVEWKELQDEKSYYQTHGLVQMLVQLFWKLDVVGVLLFTAGVGCILVPLTLAGGVSTNWRNSKIIGPFVLGFVLVPGFIYWESRLALVPFAPFKLLKDRGVWAPLGIMFFICFVYQMAAGYLYTILVVAVDESASSATRIINLYSFVTAVVAPFLGLIVTRSSRLKSYIIFGGSLYFITMGLFYRYRSGQDADGGIIAGMVIWGLSSCLFDYPTIVSIQSVTSHENMATVTALNYTVFRIGGAVAAAISGAIWTQSLYPKLLHYMGDADLATAAYGSPLTFILSNPWGTPVRSAMVEAYRHVQKYEVIVALVFSAPMFLLTFCVRDPRLTEDFAQKLPDREYVQTKEDDPINDWIAKRFAKALGRS.

The disordered stretch occupies residues 1 to 42; the sequence is MIEVPEDNRSSQTKRKNTEKNCNELMVDEKMDDDSSPRDEMK. Positions 16–42 are enriched in basic and acidic residues; that stretch reads KNTEKNCNELMVDEKMDDDSSPRDEMK. 14 helical membrane-spanning segments follow: residues 71 to 93, 106 to 128, 135 to 152, 162 to 184, 191 to 213, 223 to 245, 286 to 308, 318 to 335, 355 to 377, 392 to 414, 421 to 438, 448 to 470, 491 to 513, and 561 to 578; these read IFLF…RGTY, LIST…FGGL, LTLF…TIIQ, AAGA…LMLS, WRLF…SGSV, WSWN…ILCM, VVGV…LAGG, IIGP…FIYW, VWAP…GYLY, TRII…LIVT, SYII…GLFY, GGII…PTIV, VFRI…SLYP, and VIVA…TFCV.

The protein belongs to the major facilitator superfamily.

The protein resides in the endosome membrane. Functionally, involved in the transport of siderophore triacestylfusarinine C and so has a role in iron homeostasis. This chain is Siderophore iron transporter ARN2 (ARN2), found in Saccharomyces cerevisiae (strain ATCC 204508 / S288c) (Baker's yeast).